A 174-amino-acid polypeptide reads, in one-letter code: ATP synthase subunit b (174 aa).

Residues 9–29 traverse the membrane as a helical segment; that stretch reads LPNTSLIFWEVVTFLILLALL.

Belongs to the ATPase B chain family. F-type ATPases have 2 components, F(1) - the catalytic core - and F(0) - the membrane proton channel. F(1) has five subunits: alpha(3), beta(3), gamma(1), delta(1), epsilon(1). F(0) has three main subunits: a(1), b(2) and c(10-14). The alpha and beta chains form an alternating ring which encloses part of the gamma chain. F(1) is attached to F(0) by a central stalk formed by the gamma and epsilon chains, while a peripheral stalk is formed by the delta and b chains.

It localises to the cell membrane. Functionally, f(1)F(0) ATP synthase produces ATP from ADP in the presence of a proton or sodium gradient. F-type ATPases consist of two structural domains, F(1) containing the extramembraneous catalytic core and F(0) containing the membrane proton channel, linked together by a central stalk and a peripheral stalk. During catalysis, ATP synthesis in the catalytic domain of F(1) is coupled via a rotary mechanism of the central stalk subunits to proton translocation. Its function is as follows. Component of the F(0) channel, it forms part of the peripheral stalk, linking F(1) to F(0). This Rubrobacter xylanophilus (strain DSM 9941 / JCM 11954 / NBRC 16129 / PRD-1) protein is ATP synthase subunit b.